The primary structure comprises 533 residues: Lymphocyte cytosolic protein 2 (533 aa).

Residues 15-81 enclose the SAM domain; the sequence is WDPDSLADYF…INKNEERRSI (67 aa). Tyr23 is subject to Phosphotyrosine. The segment at 78–417 is disordered; it reads RRSIFTRKPQ…PPSPAEEENS (340 aa). Positions 108 to 155 are enriched in acidic residues; the sequence is FEEDDYESPNDDQDGEDDGDYESPNEEEEAPVEDDADYEPPPSNDEEA. The segment covering 184–213 has biased composition (pro residues); sequence QQPPVPPQRPMAALPPPPAGRNHSPLPPPQ. Residue Ser207 is modified to Phosphoserine. Composition is skewed to polar residues over residues 337 to 350 and 365 to 376; these read MSSN…TKPS and SESNSSFPQSAS. A phosphoserine mark is found at Ser376 and Ser410. Over residues 400–411 the composition is skewed to pro residues; it reads LPLPNKPRPPSP. The SH2 domain maps to 422-530; that stretch reads WYVSYITRPE…RYQCTLTHAA (109 aa).

As to quaternary structure, interacts with SLA. Interacts with CBLB. Interacts with GRB2. Interacts with SHB. Interacts with PRAM1. Interacts (via SH2 domain) with CD6 (via tyrosine phosphorylated C-terminus). Interacts with FYB1 and the phosphorylated form of FYB2. Interacts with 14-3-3 adapter/YWHAZ; this phosphorylation leads to YWHAZ proteolytic degradation. Interacts with VAV1; this interaction plays a role in TCR-mediated cytokine production. Interacts with AGER; this interaction plays an important role in AGER-mediated pro-inflammatory responses and cytokine release. Post-translationally, phosphorylated after T-cell receptor activation by ZAP70, ITK and TXK, which leads to the up-regulation of Th1 preferred cytokine IL-2. SYK-dependent phosphorylation is required for recruitment of PI3K signaling components. Highly expressed in spleen, thymus and peripheral blood leukocytes. Highly expressed also in T-cell and monocytic cell lines, expressed at lower level in B-cell lines. Not detected in fibroblast or neuroblastoma cell lines.

It localises to the cytoplasm. In terms of biological role, adapter protein primarily involved in signaling pathways within T-cells, as well as other immune cells such as platelets, mast cells, and natural killer (NK) cells. Plays a crucial role for transducing signal from the T-cell receptor (TCR) after antigen recognition leading to T-cell activation. Mechanistically, once phosphorylated by the kinase ZAP70, mediates interactions with the guanine-nucleotide exchange factor VAV1, the adapter protein NCK and the kinase ITK. In turn, stimulates the activation of PKC-theta/PRKCQ and NF-kappa-B transcriptional activity in response to CD3 and CD28 costimulation. Also plays an essential role in AGER-induced signaling pathways including p38 MAPK and ERK1/2 activation leading to cytokine release and pro-inflammatory responses. The polypeptide is Lymphocyte cytosolic protein 2 (LCP2) (Homo sapiens (Human)).